The chain runs to 472 residues: 3-isopropylmalate dehydratase large subunit (472 aa).

[4Fe-4S] cluster contacts are provided by Cys350, Cys411, and Cys414.

Belongs to the aconitase/IPM isomerase family. LeuC type 1 subfamily. As to quaternary structure, heterodimer of LeuC and LeuD. [4Fe-4S] cluster is required as a cofactor.

The catalysed reaction is (2R,3S)-3-isopropylmalate = (2S)-2-isopropylmalate. The protein operates within amino-acid biosynthesis; L-leucine biosynthesis; L-leucine from 3-methyl-2-oxobutanoate: step 2/4. In terms of biological role, catalyzes the isomerization between 2-isopropylmalate and 3-isopropylmalate, via the formation of 2-isopropylmaleate. This Alcanivorax borkumensis (strain ATCC 700651 / DSM 11573 / NCIMB 13689 / SK2) protein is 3-isopropylmalate dehydratase large subunit.